The primary structure comprises 2595 residues: Glucosylceramide transporter ABCA12 (2595 aa).

The helical transmembrane segment at 23–43 threads the bilayer; that stretch reads PLWTLVLILWPVIIFIILAIT. Over residues 109–119 the composition is skewed to basic and acidic residues; sequence LKKPSNPKRDS. The disordered stretch occupies residues 109 to 143; sequence LKKPSNPKRDSNLSLRSTQVPERSHTSLATVPPRP. N-linked (GlcNAc...) asparagine glycosylation is found at Asn-120, Asn-156, Asn-174, Asn-214, Asn-275, Asn-331, Asn-365, Asn-381, Asn-410, Asn-433, Asn-455, Asn-526, Asn-541, Asn-574, Asn-605, Asn-645, Asn-749, Asn-773, Asn-812, Asn-823, Asn-854, Asn-917, and Asn-960. Residues 120–137 show a composition bias toward polar residues; that stretch reads NLSLRSTQVPERSHTSLA. A run of 3 helical transmembrane segments spans residues 1062 to 1082, 1109 to 1129, and 1142 to 1162; these read VSYS…AAFV, FAWL…LIVI, and FILF…SYLI. Asn-1167 carries an N-linked (GlcNAc...) asparagine glycan. A run of 3 helical transmembrane segments spans residues 1171-1191, 1197-1217, and 1247-1267; these read IAAL…IVLV, LSYV…SYAS, and FGWL…IAWY. Asn-1319 carries N-linked (GlcNAc...) asparagine glycosylation. One can recognise an ABC transporter 1 domain in the interval 1346-1577; it reads VALHGVTKIY…FGDGYHLTLT (232 aa). 1378 to 1385 is a binding site for ATP; sequence GPNGAGKT. Asn-1524, Asn-1663, Asn-1673, Asn-1686, Asn-1690, and Asn-1704 each carry an N-linked (GlcNAc...) asparagine glycan. The segment at 1672-1703 is disordered; the sequence is SNMSLEHLTQRKVGNPSANGTSTPDDLSVSSS. Polar residues predominate over residues 1687–1703; it reads PSANGTSTPDDLSVSSS. A helical transmembrane segment spans residues 1747 to 1767; it reads LIAQVILPIVFVATAMGLGTL. 5 N-linked (GlcNAc...) asparagine glycosylation sites follow: Asn-1819, Asn-1835, Asn-1876, Asn-1921, and Asn-1952. 7 helical membrane-spanning segments follow: residues 1979 to 1999, 2035 to 2055, 2072 to 2092, 2103 to 2123, 2143 to 2163, 2187 to 2207, and 2270 to 2290; these read ATIS…GYSV, FIYD…VIAI, LLLL…AGLF, VCVN…VYFL, IFLI…SQQQ, GAMF…RLLI, and IIAV…GLLG. An ABC transporter 2 domain is found at 2254 to 2489; it reads VQLHRLTKTY…FGRGFTVKVH (236 aa). Residue 2290-2297 participates in ATP binding; that stretch reads GVNGAGKT. Asn-2318, Asn-2542, and Asn-2547 each carry an N-linked (GlcNAc...) asparagine glycan. Residues 2575-2587 show a composition bias toward polar residues; the sequence is VDTSSQGSTISVD. The disordered stretch occupies residues 2575–2595; it reads VDTSSQGSTISVDSQEDQLDS.

Belongs to the ABC transporter superfamily. ABCA family. As to quaternary structure, interacts with NR1H2 and ABCA1; this interaction is required for ABCA1 localization to the cell surface and is necessary for its normal activity and stability. Expressed in a number of other tissues besides skin, including heart, intestine, stomach, and kidney. Expressed mainly in the granular layer of the skin. Expressed in lung. Expressed in alpha and beta cells of pancreatic islets.

It is found in the cytoplasmic vesicle. The protein localises to the secretory vesicle membrane. The protein resides in the golgi apparatus membrane. The enzyme catalyses ATP + H2O + phospholipidSide 1 = ADP + phosphate + phospholipidSide 2.. It carries out the reaction a beta-D-glucosylceramide(in) + ATP + H2O = a beta-D-glucosylceramide(out) + ADP + phosphate + H(+). Functionally, transports lipids such as glucosylceramides from the outer to the inner leaflet of lamellar granules (LGs) membrane, whereby the lipids are finally transported to the keratinocyte periphery via the trans-Golgi network and LGs and released to the apical surface of the granular keratinocytes to form lipid lamellae in the stratum corneum of the epidermis, which is essential for skin barrier function. In the meantime, participates in the transport of the lamellar granules-associated proteolytic enzymes, in turn regulates desquamation and keratinocyte differentiation. Furthermore, is essential for the regulation of cellular cholesterol homeostasis by regulating ABCA1-dependent cholesterol efflux from macrophages through interaction with NR1H2 and ABCA1. Plays pleiotropic roles in regulating glucose stimulated insulin secretion from beta cells, regulating the morphology and fusion of insulin granules, lipid raft abundance and the actin cytoskeleton. Also involved in lung surfactant biogenesis. The sequence is that of Glucosylceramide transporter ABCA12 from Mus musculus (Mouse).